A 313-amino-acid polypeptide reads, in one-letter code: E3 ubiquitin-protein ligase RNF126 (313 aa).

A2 is subject to N-acetylalanine. S5 carries the phosphoserine modification. Positions 5 to 101 (SPQPGRYFCH…FEIPTFPPGA (97 aa)) are required for interaction with BAG6. Positions 13, 16, 29, and 32 each coordinate Zn(2+). The C4-type zinc finger occupies 13–32 (CHCCSVEIVPRLPDYICPRC). Disordered stretches follow at residues 42-64 (EETRSAENGSAPSTASADQSRQQ) and 96-128 (TFPPGAQADDSRDPESRREREQHSRHRYGARQP). The segment covering 47–64 (AENGSAPSTASADQSRQQ) has biased composition (polar residues). Residues 104 to 117 (DDSRDPESRREREQ) are compositionally biased toward basic and acidic residues. Over residues 118–128 (HSRHRYGARQP) the composition is skewed to basic residues. Residues 203 to 306 (TGPPPADKEK…SSSSSSSPGN (104 aa)) form a sufficient for interaction with AICDA region. Residues 232 to 273 (CPVCKDDYGLGEHVRQLPCNHLFHDGCIVPWLEQHDSCPVCR) form an RING-type zinc finger. The tract at residues 280 to 313 (NTATDPPGLAGVSFSSSSSSSSSSPGNENPASSS) is disordered. Low complexity predominate over residues 292–313 (SFSSSSSSSSSSPGNENPASSS).

In terms of assembly, interacts with CCDC50, EGFR, FLT3 and SCAMP3. Interacts with BAG6 (via ubiquitin-like domain); required for BAG6-dependent ubiquitination of proteins mislocalized to the cytosol. Interacts with CDKN1A. Interacts with AICDA. In terms of processing, ubiquitinated. May undergo autoubiquitination.

It localises to the cytoplasm. It is found in the nucleus. It carries out the reaction S-ubiquitinyl-[E2 ubiquitin-conjugating enzyme]-L-cysteine + [acceptor protein]-L-lysine = [E2 ubiquitin-conjugating enzyme]-L-cysteine + N(6)-ubiquitinyl-[acceptor protein]-L-lysine.. It participates in protein modification; protein ubiquitination. E3 ubiquitin-protein ligase that mediates ubiquitination oF target proteins. Depending on the associated E2 ligase, mediates 'Lys-27'-, 'Lys-29'-, 'Lys-48'- and/or 'Lys-63'-linked polyubiquitination of substrates. Part of a BAG6-dependent quality control process ensuring that proteins of the secretory pathway that are mislocalized to the cytosol are degraded by the proteasome. Probably acts by providing the ubiquitin ligase activity associated with the BAG6 complex and be responsible for ubiquitination of the hydrophobic mislocalized proteins and their targeting to the proteasome. May also play a role in the endosomal recycling of IGF2R, the cation-independent mannose-6-phosphate receptor. May play a role in the endosomal sorting and degradation of several membrane receptors including EGFR, FLT3, MET and CXCR4, by mediating their ubiquitination. By ubiquitinating CDKN1A/p21 and targeting it for degradation, may also promote cell proliferation. May monoubiquitinate AICDA. Acts as a regulator of DNA repair by mediating 'Lys-27'- and 'Lys-29'-linked polyubiquitination of MRE11, thereby promoting the exonuclease activity of MRE11. This Bos taurus (Bovine) protein is E3 ubiquitin-protein ligase RNF126.